Consider the following 580-residue polypeptide: Glutamine--tRNA ligase (580 aa).

The short motif at 41 to 51 (PEPNGYLHIGH) is the 'HIGH' region element. ATP-binding positions include 42-44 (EPN) and 48-54 (HIGHAKA). The L-glutamine site is built by Asp74 and Tyr218. ATP-binding positions include Thr237, 285 to 286 (RL), and 293 to 295 (MSK). The 'KMSKS' region motif lies at 292 to 296 (VMSKR).

This sequence belongs to the class-I aminoacyl-tRNA synthetase family. Monomer.

Its subcellular location is the cytoplasm. It carries out the reaction tRNA(Gln) + L-glutamine + ATP = L-glutaminyl-tRNA(Gln) + AMP + diphosphate. This Xylella fastidiosa (strain 9a5c) protein is Glutamine--tRNA ligase.